A 568-amino-acid polypeptide reads, in one-letter code: K(+) efflux antiporter 5 (568 aa).

The signal sequence occupies residues 1–20 (MARFAVIGLTFLLLLGTSLS). The tract at residues 59-78 (EFSENDSPEGSDGASFNSSV) is disordered. The next 12 helical transmembrane spans lie at 154-174 (LISDLVVIIVFAAIGGIVFSC), 178-198 (PVIVGYLLAGSIIGPGGLKFI), 201-221 (MVQVETVAQFGVVFLLFALGL), 230-250 (VVGPVAVLGGLLQIVLLMFLC), 264-284 (GIFVGAFLSMSSTAVVVKFLV), 298-318 (IGILIFQDCVVGLLFALLPVL), 334-354 (LLLILSIYLTVASLLTWSFVP), 389-409 (LGLSLELGSFVAGVMLSTTEF), 422-442 (NLFAALFLSSIGMLINVHFLW), 447-467 (ILLASVILVIVIKTAIAAVVV), 476-496 (ISFHVGVLLAQIGEFAFVLLS), and 510-530 (LLLLGTTALSLVTTPLLFKLI).

The protein belongs to the monovalent cation:proton antiporter 2 (CPA2) transporter (TC 2.A.37) family. KEA (TC 2.A.37.1) subfamily. As to expression, expressed in roots, stems, leaves, flowers and silique.

It is found in the golgi apparatus membrane. It localises to the golgi apparatus. The protein localises to the trans-Golgi network membrane. The protein resides in the prevacuolar compartment membrane. Its subcellular location is the endomembrane system. The catalysed reaction is K(+)(in) + H(+)(out) = K(+)(out) + H(+)(in). In terms of biological role, electroneutral K(+)/H(+) efflux antiporter involved in K(+) homeostasis and osmotic adjustment. Together with KEA4 and KEA6, promotes growth and development, and facilitates endosomal pH and ions homeostasis, as well as salt tolerance (e.g. K(+), NaCl and LiCl), probably by supporting cell wall biosynthesis during rapid etiolated seedling growth. The protein is K(+) efflux antiporter 5 of Arabidopsis thaliana (Mouse-ear cress).